The chain runs to 132 residues: Fatty acid-binding protein 1 (132 aa).

A fatty acid-binding positions include Arg-106 and 128-130; that span reads RYY.

It belongs to the calycin superfamily. Fatty-acid binding protein (FABP) family. As to quaternary structure, monomer. Midgut.

It localises to the cytoplasm. Binds fatty acids in a 1:1 molar ratio. The polypeptide is Fatty acid-binding protein 1 (MFB1) (Manduca sexta (Tobacco hawkmoth)).